A 426-amino-acid polypeptide reads, in one-letter code: 3-phosphoshikimate 1-carboxyvinyltransferase (426 aa).

Positions 23, 24, and 28 each coordinate 3-phosphoshikimate. Lys23 provides a ligand contact to phosphoenolpyruvate. Phosphoenolpyruvate contacts are provided by Gly96 and Arg124. 3-phosphoshikimate-binding residues include Thr170, Ser171, Gln172, Ser198, Asp314, and Lys341. A phosphoenolpyruvate-binding site is contributed by Gln172. Asp314 acts as the Proton acceptor in catalysis. Phosphoenolpyruvate is bound by residues Arg345, Arg386, and Lys411.

This sequence belongs to the EPSP synthase family. Monomer.

It is found in the cytoplasm. It catalyses the reaction 3-phosphoshikimate + phosphoenolpyruvate = 5-O-(1-carboxyvinyl)-3-phosphoshikimate + phosphate. It functions in the pathway metabolic intermediate biosynthesis; chorismate biosynthesis; chorismate from D-erythrose 4-phosphate and phosphoenolpyruvate: step 6/7. Functionally, catalyzes the transfer of the enolpyruvyl moiety of phosphoenolpyruvate (PEP) to the 5-hydroxyl of shikimate-3-phosphate (S3P) to produce enolpyruvyl shikimate-3-phosphate and inorganic phosphate. This chain is 3-phosphoshikimate 1-carboxyvinyltransferase, found in Trichormus variabilis (strain ATCC 29413 / PCC 7937) (Anabaena variabilis).